The chain runs to 520 residues: Bifunctional purine biosynthesis protein PurH (520 aa).

One can recognise an MGS-like domain in the interval 1 to 147; it reads MAKIGRALIS…KNNRDVTVVV (147 aa).

Belongs to the PurH family.

It catalyses the reaction (6R)-10-formyltetrahydrofolate + 5-amino-1-(5-phospho-beta-D-ribosyl)imidazole-4-carboxamide = 5-formamido-1-(5-phospho-D-ribosyl)imidazole-4-carboxamide + (6S)-5,6,7,8-tetrahydrofolate. The enzyme catalyses IMP + H2O = 5-formamido-1-(5-phospho-D-ribosyl)imidazole-4-carboxamide. It participates in purine metabolism; IMP biosynthesis via de novo pathway; 5-formamido-1-(5-phospho-D-ribosyl)imidazole-4-carboxamide from 5-amino-1-(5-phospho-D-ribosyl)imidazole-4-carboxamide (10-formyl THF route): step 1/1. It functions in the pathway purine metabolism; IMP biosynthesis via de novo pathway; IMP from 5-formamido-1-(5-phospho-D-ribosyl)imidazole-4-carboxamide: step 1/1. This Geobacter sp. (strain M21) protein is Bifunctional purine biosynthesis protein PurH.